Consider the following 88-residue polypeptide: Small ribosomal subunit protein bS16c (88 aa).

This sequence belongs to the bacterial ribosomal protein bS16 family.

It is found in the plastid. The protein resides in the chloroplast. The chain is Small ribosomal subunit protein bS16c from Gossypium barbadense (Sea Island cotton).